A 711-amino-acid chain; its full sequence is Probable cyclic nucleotide-gated ion channel 10 (711 aa).

The Cytoplasmic portion of the chain corresponds to 1 to 81 (MAFSHDNRVR…QDSFLQNWNK (81 aa)). Residues 82-102 (IFLFACVVALAIDPLFFYIPI) traverse the membrane as a helical segment. The Extracellular portion of the chain corresponds to 103–116 (VDSARHCLTLDSKL). The chain crosses the membrane as a helical span at residues 117–137 (EIAASLLRTLIDAFYIIHIVF). The Cytoplasmic portion of the chain corresponds to 138–170 (QFRTAYIAPSSRVFGRGELVDDAKAIALKYLSS). A helical transmembrane segment spans residues 171–191 (YFIIDLLSILPLPQIVVLAVI). The Extracellular portion of the chain corresponds to 192–204 (PSVNQPVSLLTKD). Residues 205-225 (YLKFSIIAQYVPRILRMYPLY) traverse the membrane as a helical segment. Residues 226 to 243 (TEVTRTSGIVTETAWAGA) are Cytoplasmic-facing. The helical transmembrane segment at 244-264 (AWNLSLYMLASHVFGALWYLI) threads the bilayer. The Extracellular segment spans residues 265 to 366 (SVEREDRCWQ…GQNLQTSKFV (102 aa)). Residues 367–387 (GEIIFAISICISGLVLFALLI) form a helical membrane-spanning segment. Residues 388–711 (GNMQKYLEST…DFTANHTTDP (324 aa)) are Cytoplasmic-facing. A nucleoside 3',5'-cyclic phosphate-binding positions include 473 to 603 (LFEI…TFRF) and E544. The interval 589 to 604 (FRRLHSKQLQHTFRFY) is calmodulin-binding. Positions 609–638 (RTWSVSFIQAAWRRYCRRKLAKSLRDEEDR) constitute an IQ domain. The tract at residues 689–711 (YTLPLLPQKPTEPDFTANHTTDP) is disordered.

This sequence belongs to the cyclic nucleotide-gated cation channel (TC 1.A.1.5) family. In terms of assembly, homotetramer or heterotetramer.

Its subcellular location is the cell membrane. Probable cyclic nucleotide-gated ion channel. The polypeptide is Probable cyclic nucleotide-gated ion channel 10 (CNGC10) (Arabidopsis thaliana (Mouse-ear cress)).